The chain runs to 308 residues: Pyrroline-5-carboxylate reductase 3 (308 aa).

This sequence belongs to the pyrroline-5-carboxylate reductase family. In terms of assembly, homodecamer; composed of 5 homodimers.

The protein localises to the cytoplasm. It catalyses the reaction L-proline + NADP(+) = (S)-1-pyrroline-5-carboxylate + NADPH + 2 H(+). The catalysed reaction is L-proline + NAD(+) = (S)-1-pyrroline-5-carboxylate + NADH + 2 H(+). Its pathway is amino-acid biosynthesis; L-proline biosynthesis; L-proline from L-glutamate 5-semialdehyde: step 1/1. Functionally, oxidoreductase that catalyzes the last step in proline biosynthesis, which corresponds to the reduction of pyrroline-5-carboxylate (P5C) to L-proline using NAD(P)H. Proline is synthesized from either glutamate or ornithine; both are converted to P5C, and then to proline via pyrroline-5-carboxylate reductases (PYCRs). PYCR3 is exclusively linked to the biosynthesis of proline from ornithine. In Bos taurus (Bovine), this protein is Pyrroline-5-carboxylate reductase 3.